Here is a 279-residue protein sequence, read N- to C-terminus: Protein FAM151B (279 aa).

This sequence belongs to the menorin family.

In terms of biological role, essential for survival of retinal photoreceptor cells. This chain is Protein FAM151B (Fam151b), found in Mus musculus (Mouse).